The following is an 880-amino-acid chain: Alanine--tRNA ligase (880 aa).

Residues histidine 563, histidine 567, cysteine 665, and histidine 669 each coordinate Zn(2+).

Belongs to the class-II aminoacyl-tRNA synthetase family. Requires Zn(2+) as cofactor.

It is found in the cytoplasm. It carries out the reaction tRNA(Ala) + L-alanine + ATP = L-alanyl-tRNA(Ala) + AMP + diphosphate. Its function is as follows. Catalyzes the attachment of alanine to tRNA(Ala) in a two-step reaction: alanine is first activated by ATP to form Ala-AMP and then transferred to the acceptor end of tRNA(Ala). Also edits incorrectly charged Ser-tRNA(Ala) and Gly-tRNA(Ala) via its editing domain. In Desulforudis audaxviator (strain MP104C), this protein is Alanine--tRNA ligase.